The chain runs to 224 residues: Non-structural protein V (224 aa).

Over residues 54–65 the composition is skewed to polar residues; the sequence is QKNIQHPTASHQ. Disordered regions lie at residues 54 to 94 and 150 to 172; these read QKNI…TQIP and TEFKRGAGSGCSRPDNPRGGHRR. Residues H170, C189, C193, C205, C207, C210, C214, and C217 each coordinate Zn(2+).

It belongs to the paramyxoviruses V protein family. Interacts with host IFIH1/MDA5 and DHX58/LGP2. Forms with host DDB1, CUL4A, STAT1, STAT2 and STAT3 the mumps virus V-dependent complex (VDC).

It localises to the virion. The protein resides in the host cytoplasm. Its function is as follows. Plays an essential role in the inhibition of host immune response. Prevents the establishment of cellular antiviral state by blocking interferon-alpha/beta (IFN-alpha/beta) production and signaling pathway. Interacts with host IFIH1/MDA5 and DHX58/LGP2 to inhibit the transduction pathway involved in the activation of IFN-beta promoter, thus protecting the virus against cell antiviral state. Blocks the type I and II interferon signaling pathways by interacting with host STAT1, STAT2 and STAT3, and mediating their ubiquitination and subsequent proteasomal degradation. In Homo sapiens (Human), this protein is Non-structural protein V.